The sequence spans 161 residues: ATP synthase subunit b 1 (161 aa).

Residues 3–23 (LDATFYALVGLILFFVLIAYL) traverse the membrane as a helical segment.

The protein belongs to the ATPase B chain family. In terms of assembly, F-type ATPases have 2 components, F(1) - the catalytic core - and F(0) - the membrane proton channel. F(1) has five subunits: alpha(3), beta(3), gamma(1), delta(1), epsilon(1). F(0) has three main subunits: a(1), b(2) and c(10-14). The alpha and beta chains form an alternating ring which encloses part of the gamma chain. F(1) is attached to F(0) by a central stalk formed by the gamma and epsilon chains, while a peripheral stalk is formed by the delta and b chains.

The protein localises to the cell inner membrane. Its function is as follows. F(1)F(0) ATP synthase produces ATP from ADP in the presence of a proton or sodium gradient. F-type ATPases consist of two structural domains, F(1) containing the extramembraneous catalytic core and F(0) containing the membrane proton channel, linked together by a central stalk and a peripheral stalk. During catalysis, ATP synthesis in the catalytic domain of F(1) is coupled via a rotary mechanism of the central stalk subunits to proton translocation. In terms of biological role, component of the F(0) channel, it forms part of the peripheral stalk, linking F(1) to F(0). This chain is ATP synthase subunit b 1, found in Rhizobium meliloti (strain 1021) (Ensifer meliloti).